We begin with the raw amino-acid sequence, 857 residues long: Protein app1 (857 aa).

In terms of domain architecture, ADF-H spans 6 to 133; sequence DTSTHGAEIR…NMDDIIRRVA (128 aa). Disordered regions lie at residues 167–562, 585–622, and 693–723; these read AKVA…VPQR, EVPS…VPQR, and QLNE…TEHT. The span at 193 to 204 shows a compositional bias: basic and acidic residues; it reads KDSKDNSWDDSS. Residues 205 to 217 are compositionally biased toward low complexity; sequence KQSNTQTANTTSN. A compositionally biased stretch (basic and acidic residues) spans 229-240; it reads AGRKEKSQENKP. Polar residues-rich tracts occupy residues 276-295, 371-385, 399-409, 443-452, and 498-511; these read SIST…SHAP, PPAS…SPST, KQVSSNETSAQ, KISSFNSKAG, and SSAS…SVIT. The span at 522-561 shows a compositional bias: low complexity; sequence VVPEAPSVHQPPAAPVAPEVPSAPQRPAAPVVPEAPSVPQ. Composition is skewed to pro residues over residues 587–596 and 602–611; these read PSVPQPPVAP. Residues 612 to 622 show a composition bias toward low complexity; the sequence is VAPEVPSVPQR. 2 consecutive SH3 domains span residues 725-785 and 800-857; these read PTKT…ITGP and GPGK…VEEI.

The polypeptide is Protein app1 (app1) (Schizosaccharomyces pombe (strain 972 / ATCC 24843) (Fission yeast)).